Reading from the N-terminus, the 144-residue chain is Mercuric transport protein MerC (144 aa).

The Cytoplasmic segment spans residues 1–21 (MSAITRIIDKIGIVGTIVGSF). The chain crosses the membrane as a helical span at residues 22-42 (SCAMCFPAAASLGAAIGLGFL). Hg(2+)-binding residues include Cys23 and Cys26. Over 43–46 (SQWE) the chain is Periplasmic. The chain crosses the membrane as a helical span at residues 47 to 67 (GLFVQWLIPIFASVALLATLA). Topologically, residues 68–78 (GWFSHRQWQRT) are cytoplasmic. A helical transmembrane segment spans residues 79-99 (LLGSIGPVLALVGVFGLTHHF). Over 100–103 (LDKD) the chain is Periplasmic. Residues 104-124 (LARVIFYTGLVVMFLVSIWDM) form a helical membrane-spanning segment. Over 125–144 (VNPANRRCATDGCETPAPRS) the chain is Cytoplasmic.

As to quaternary structure, monomer.

It is found in the cell inner membrane. With respect to regulation, inhibited by the thiol-modifying reagent N-ethylmaleimide (NEM). Involved in mercuric ion uptake. This Acidithiobacillus ferrooxidans (Thiobacillus ferrooxidans) protein is Mercuric transport protein MerC.